The chain runs to 264 residues: Adenosylcobinamide-GDP ribazoletransferase (264 aa).

A run of 6 helical transmembrane segments spans residues 39–59 (IAYA…AILI), 63–83 (ALGL…VLLT), 121–141 (ACAL…LLAL), 148–168 (LALI…LEFL), 201–221 (LLIV…LSVL), and 241–261 (VAGA…LIYA).

The protein belongs to the CobS family. Mg(2+) is required as a cofactor.

The protein localises to the cell inner membrane. The enzyme catalyses alpha-ribazole + adenosylcob(III)inamide-GDP = adenosylcob(III)alamin + GMP + H(+). The catalysed reaction is alpha-ribazole 5'-phosphate + adenosylcob(III)inamide-GDP = adenosylcob(III)alamin 5'-phosphate + GMP + H(+). It functions in the pathway cofactor biosynthesis; adenosylcobalamin biosynthesis; adenosylcobalamin from cob(II)yrinate a,c-diamide: step 7/7. Its function is as follows. Joins adenosylcobinamide-GDP and alpha-ribazole to generate adenosylcobalamin (Ado-cobalamin). Also synthesizes adenosylcobalamin 5'-phosphate from adenosylcobinamide-GDP and alpha-ribazole 5'-phosphate. The polypeptide is Adenosylcobinamide-GDP ribazoletransferase (Azorhizobium caulinodans (strain ATCC 43989 / DSM 5975 / JCM 20966 / LMG 6465 / NBRC 14845 / NCIMB 13405 / ORS 571)).